A 293-amino-acid chain; its full sequence is Ribosomal protein L11 methyltransferase (293 aa).

S-adenosyl-L-methionine-binding residues include threonine 144, glycine 165, aspartate 187, and asparagine 228.

Belongs to the methyltransferase superfamily. PrmA family.

The protein localises to the cytoplasm. The enzyme catalyses L-lysyl-[protein] + 3 S-adenosyl-L-methionine = N(6),N(6),N(6)-trimethyl-L-lysyl-[protein] + 3 S-adenosyl-L-homocysteine + 3 H(+). Methylates ribosomal protein L11. This is Ribosomal protein L11 methyltransferase from Methylococcus capsulatus (strain ATCC 33009 / NCIMB 11132 / Bath).